A 102-amino-acid chain; its full sequence is Small ribosomal subunit protein uS10 (102 aa).

It belongs to the universal ribosomal protein uS10 family. In terms of assembly, part of the 30S ribosomal subunit.

Functionally, involved in the binding of tRNA to the ribosomes. The polypeptide is Small ribosomal subunit protein uS10 (Thiobacillus denitrificans (strain ATCC 25259 / T1)).